A 214-amino-acid polypeptide reads, in one-letter code: Ribonuclease P protein component 3 (214 aa).

It belongs to the eukaryotic/archaeal RNase P protein component 3 family. In terms of assembly, consists of a catalytic RNA component and at least 4-5 protein subunits. Forms a subcomplex with Rnp2 which stimulates the catalytic RNA.

The protein localises to the cytoplasm. It catalyses the reaction Endonucleolytic cleavage of RNA, removing 5'-extranucleotides from tRNA precursor.. Functionally, part of ribonuclease P, a protein complex that generates mature tRNA molecules by cleaving their 5'-ends. The RNA is catalytic, but its KM for pre-tRNA is 170-fold decreased in the presence of the 4 known protein subunits (Rnp1-4). The protein subunits also decrease the amount of Mg(2+) needed for activity. The chain is Ribonuclease P protein component 3 from Pyrococcus furiosus (strain ATCC 43587 / DSM 3638 / JCM 8422 / Vc1).